Consider the following 86-residue polypeptide: MLRLVLLLLVTDFAASHETLDSSDSQIMKRSQFRTPDCGHFDFPACPRNLNPVCGTDMNTYSNECTLCMKIREDGSHINIIKDEPC.

The N-terminal stretch at methionine 1–serine 16 is a signal peptide. In terms of domain architecture, Kazal-like spans glutamine 32 to cysteine 86. 3 disulfides stabilise this stretch: cysteine 38–cysteine 68, cysteine 46–cysteine 65, and cysteine 54–cysteine 86.

As to expression, expressed in sperm (at protein level). Expressed in testis but not in ovary, brain, heart, kidney or lung. Within testis, expressed in epididymis and germ cells.

It is found in the secreted. Its subcellular location is the cytoplasmic vesicle. It localises to the secretory vesicle. The protein resides in the acrosome. Its function is as follows. As a strong inhibitor of acrosin, it is required for normal spermiogenesis. It probably hinders premature activation of proacrosin and other proteases, thus preventing the cascade of events leading to spermiogenesis defects. May be involved in the regulation of serine protease-dependent germ cell apoptosis. It also inhibits trypsin. This Mus musculus (Mouse) protein is Serine protease inhibitor Kazal-type 2 (Spink2).